A 118-amino-acid chain; its full sequence is Mu-like prophage FluMu tail tube protein (118 aa).

The tract at residues 12–32 is disordered; it reads RLNGKEWPSDNDGTLTPGGKE.

This sequence to phage Mu protein M.

This Haemophilus influenzae (strain ATCC 51907 / DSM 11121 / KW20 / Rd) protein is Mu-like prophage FluMu tail tube protein.